We begin with the raw amino-acid sequence, 10061 residues long: MATH and LRR domain-containing protein PFE0570w (10061 aa).

3 disordered regions span residues 166 to 210 (DMDN…EKKN), 244 to 471 (NNSD…NDIN), and 1004 to 1170 (DDQK…DTSF). Residues 169-179 (NNPNNHVSNNG) show a composition bias toward polar residues. Residues 193 to 205 (TSNSIHKNNNTNI) show a composition bias toward low complexity. Residues 270–282 (KKSDNNNDKKNDD) are compositionally biased toward basic and acidic residues. Residues 285 to 320 (NNNNNNNNNNNNNNNNNDNHVCTSNNQPNTINKQNN) are compositionally biased toward low complexity. Residues 328–338 (DQNGRTKITPQ) show a composition bias toward polar residues. A coiled-coil region spans residues 338 to 366 (QNVNQKEKEIKNVVKEKNNFNREEKDITN). The span at 342-365 (QKEKEIKNVVKEKNNFNREEKDIT) shows a compositional bias: basic and acidic residues. Positions 366–375 (NSDDYDENST) are enriched in acidic residues. 2 stretches are compositionally biased toward polar residues: residues 376–389 (DESC…TSSE) and 421–437 (VPSN…SAEN). A coiled-coil region spans residues 431-469 (NVKSAENCNKEKKKKKKKKKKELNNDNKDNTLNNETMND). Positions 441–451 (EKKKKKKKKKK) are enriched in basic residues. The segment covering 460–471 (NTLNNETMNDIN) has biased composition (low complexity). A compositionally biased stretch (basic and acidic residues) spans 1025 to 1037 (NEEKPNVNKEGNI). Positions 1047-1057 (NKNKNNNNNNN) are enriched in low complexity. Residues 1058–1132 (DKNDKNDKND…KKKKNGKEQN (75 aa)) show a composition bias toward basic and acidic residues. Residues 1133–1165 (EDSTESDDESSVIDDNYIDDDSCDCDSESDSID) show a composition bias toward acidic residues. One can recognise an MATH domain in the interval 1328 to 1458 (NGKIELYIPN…SGGLLIKGKV (131 aa)). A disordered region spans residues 1651–1698 (GGNLQNEQKGDEDVKKEDVKKENVNKEEIKNGNNNNNNDENENEVDDN). The span at 1658 to 1680 (QKGDEDVKKEDVKKENVNKEEIK) shows a compositional bias: basic and acidic residues. Positions 1916 to 1948 (NYLSNLNKVKININDLNNNIVDVNNSIHNIEKE) form a coiled coil. The span at 1973 to 1995 (HKETSSIQNKGKEKSNNNIKSDD) shows a compositional bias: basic and acidic residues. Disordered stretches follow at residues 1973–1998 (HKET…DNNN), 2155–2245 (LNKS…PSYK), 2427–2566 (YSDD…NNIK), and 3120–3139 (SNET…NEMK). Residues 2216–2228 (NNDDKDDDDDDSY) show a composition bias toward acidic residues. Residues 2235–2245 (SDGKKNDPSYK) are compositionally biased toward basic and acidic residues. Low complexity predominate over residues 2475-2484 (NNNNNNNNMM). Composition is skewed to basic and acidic residues over residues 2487-2496 (DDNKVNKNEE) and 2505-2527 (QIKE…RNED). 2 stretches are compositionally biased toward low complexity: residues 2552-2564 (NNNN…NNNN) and 3121-3133 (NETN…NRTN). Positions 2555 to 2580 (NNNNNNNNNNIKRLDDSYNKLLKNKN) form a coiled coil. The helical transmembrane segment at 3398–3418 (KLILKKIFMYLNIICMIIKYI) threads the bilayer. Disordered regions lie at residues 3802-3826 (STND…YSKK), 3847-3890 (LTSG…DNNN), and 3919-3953 (ESND…EKKS). The span at 3809–3822 (VDRSDDSESNDDKK) shows a compositional bias: basic and acidic residues. Residues 3851–3890 (NSSSKNSKKNSNNESIQMDNTNNSNSNNNNKNDNNNDNNN) show a composition bias toward low complexity. Residues 3926–3941 (KNQNIQSNEQSVTPNR) show a composition bias toward polar residues. Residues 3942–3953 (NIEENKDHEKKS) show a composition bias toward basic and acidic residues. The stretch at 3977 to 4001 (EHLGNATAVLNILQKKLENEELKKL) forms a coiled coil. The segment covering 4039–4065 (VSAHKEKNVKTDSSDDKKKKEDNENNN) has biased composition (basic and acidic residues). 6 disordered regions span residues 4039 to 4074 (VSAH…IIHN), 4155 to 4180 (KGNN…NNMG), 4352 to 4414 (SNNN…NNNN), 4919 to 4943 (NKRK…DNDN), 4991 to 5030 (DGLN…KNEK), and 5179 to 5207 (SKIA…KSNL). Residues 4157–4178 (NNSKDNNNNNNNNNNNNNNKNN) show a composition bias toward low complexity. The stretch at 4399–4424 (NNNNNNNNNNNNNNNNVNKEIIKLNS) forms a coiled coil. Composition is skewed to low complexity over residues 4929–4943 (NNNN…DNDN), 5004–5019 (NMNN…NNSN), and 5185–5202 (NGNN…NNNN). A coiled-coil region spans residues 5006–5046 (NNVKNKNNNNNNSNNKRKKNEKNEKIDKIEQFLHESELEKD). Coiled-coil stretches lie at residues 5486-5563 (NNNN…NIYE), 5728-5810 (DVLK…DKEE), and 5900-6022 (MNND…INNY). Composition is skewed to basic and acidic residues over residues 5716–5732 (KDAK…VLKD), 5738–5811 (SNKE…KEEP), and 5909–5953 (NKNK…KKDN). Disordered regions lie at residues 5716 to 5816 (KDAK…QINE), 5892 to 6009 (EIIN…KKLK), 6123 to 6142 (KSET…VDGK), 6299 to 6338 (NDSI…DKGE), 6722 to 6760 (NMNN…NNNI), 7585 to 7730 (EDML…VEEK), and 7744 to 7787 (DLLS…KKSS). Residues 5954 to 5968 (NNSNNNNNNNNLSNN) are compositionally biased toward low complexity. Residues 5969 to 5978 (GEEDPNDSDS) are compositionally biased toward acidic residues. Positions 5991 to 6003 (NKNINDDSDDNNK) are enriched in basic and acidic residues. Positions 6129-6138 (SNKNVESNDN) are enriched in polar residues. Low complexity-rich tracts occupy residues 6314-6333 (SNSN…NNNN) and 6722-6759 (NMNN…NNNN). Residues 6719–6743 (NMNNMNNNNNNNNNNNNNNNNNNNN) adopt a coiled-coil conformation. Residues 7585-7599 (EDMLHSKKTDVIQHG) show a composition bias toward basic and acidic residues. Residues 7600-7685 (DEEEDDEEDD…EHINEEEQED (86 aa)) are compositionally biased toward acidic residues. Coiled-coil stretches lie at residues 7601-7637 (EEED…DIED), 7710-7813 (NTKI…NKNE), 7934-7961 (KTDE…IDNE), and 8217-8241 (NINN…GKRE). Over residues 7749–7765 (SKKKNHKDKRNASKNKN) the composition is skewed to basic residues. Basic and acidic residues predominate over residues 7766-7786 (KNKDILKKNENNINDEKEKKS). 3 disordered regions span residues 8189-8252 (ETGG…GGEE), 8293-8380 (GKVS…IIMS), and 8474-8497 (KKKN…MDEE). A compositionally biased stretch (basic and acidic residues) spans 8218-8242 (INNKEKETNKNEEQQQGEAEGKREG). The segment covering 8243-8252 (EGEEGEGGEE) has biased composition (acidic residues). Residues 8305–8314 (LLNDKEHEKD) are compositionally biased toward basic and acidic residues. Residues 8315 to 8363 (NEDNDEDNDEDDDDEDDDEDDEDDDDDDDDDDDDDDDDDYDEDYDEDYD) show a composition bias toward acidic residues. Positions 8364 to 8374 (EKLVENKKNER) are enriched in basic and acidic residues. Residues 8478 to 8492 (YSNNNIYNNNSSNKV) are compositionally biased toward low complexity. Coiled coils occupy residues 8644 to 8697 (SETL…ELNN), 8882 to 8907 (QYLE…VDNY), and 9219 to 9247 (IDMK…SNNN). Disordered stretches follow at residues 9759–9779 (TIPR…NNNS), 9891–9926 (SNTS…SSSN), and 9985–10061 (KNNS…NNIY). Composition is skewed to low complexity over residues 9764-9779 (NTTT…NNNS), 9899-9926 (NSSN…SSSN), and 9986-10022 (NNSI…NNNT). Over residues 10031–10041 (IFQQNQNHSDT) the composition is skewed to polar residues. The span at 10042–10061 (NNNNNNNNKNNSNNNNNNIY) shows a compositional bias: low complexity.

The protein resides in the membrane. The chain is MATH and LRR domain-containing protein PFE0570w from Plasmodium falciparum (isolate 3D7).